A 942-amino-acid polypeptide reads, in one-letter code: MEGDDFTPEGGKLPEFKLDARQAQGFISFFKKLPQDPRAVRLFDRRDYYTAHGENATFIARTYYHTMSALRQLGSSSDGILSASVSKAMFETIARNILLERTDCTLELYEGSGSNWRLTKSGTPGNIGSFEDILFANNDMEDSPVIVALFPACRESQLYVGLSFLDMTNRKLGLAEFPEDSRFTNVESALVALGCKECLLPADCEKSIDLNPLQDVISNCNVLLTEKKKADFKSRDLAQDLGRIIRGSVEPVRDLLSQFDYALGPLGALLSYAELLADDTNYGNYTIEKYNLNCYMRLDSAAVRALNIAEGKTDVNKNFSLFGLMNRTCTVGMGKRLLNRWLKQPLLDVNEINNRLDMVQAFVEDPELRQGLRQQLKRISDIDRLTHSLRKKSANLQPVVKLYQSCSRIPYIKGILQQYNGQFSTLIRSKFLEPLEEWMAKNRFGRFSSLVETAIDLAQLENGEYRISPLYSSDLGVLKDELSVVENHINNLHVDTASDLDLSVDKQLKLEKGSLGHVFRMSKKEEQKVRKKLTGSYLIIETRKDGVKFTNSKLKNLSDQYQALFGEYTSCQKKVVGDVVRVSGTFSEVFENFAAVLSELDVLQSFADLATSCPVPYVRPDITASDEGDIVLLGSRHPCLEAQDGVNFIPNDCTLVRGKSWFQIITGPNMGGKSTFIRQVGVNVLMAQVGSFVPCDQASISVRDCIFARVGAGDCQLHGVSTFMQEMLETASILKGASDKSLIIIDELGRGTSTYDGFGLAWAICEHLMEVTRAPTLFATHFHELTALAHRNDDEHQHISDIGVANYHVGAHIDPLSRKLTMLYKVEPGACDQSFGIHVAEFANFPEAVVALAKSKAAELEDFSTTPTFSDDLKDEVGSKRKRVFSPDDITRGAARARLFLEEFAALPMDEMDGSKILEMATKMKADLQKDAADNPWLQQFF.

667-674 (GPNMGGKS) is a binding site for ATP.

The protein belongs to the DNA mismatch repair MutS family. As to quaternary structure, heterodimer of MSH2 and MSH6 (GTBP).

The protein resides in the nucleus. Functionally, involved in postreplication mismatch repair. Binds specifically to DNA containing mismatched nucleotides thus providing a target for the excision repair processes characteristic of postreplication mismatch repair. The protein is DNA mismatch repair protein MSH2 (MUS1) of Zea mays (Maize).